A 116-amino-acid chain; its full sequence is U11-theraphotoxin-Hhn1c (116 aa).

The signal sequence occupies residues 1–21 (MNTVRVTFLLVFVLAVSLGQA). Positions 22 to 74 (DKDENRMEMQEKTEQGKSYLDFAENLLLQKLEELEAKLLEEDSEESRNSRQKR) are excised as a propeptide. A disordered region spans residues 61-83 (EEDSEESRNSRQKRCIGEGVPCD). Disulfide bonds link Cys-75–Cys-90, Cys-82–Cys-95, and Cys-89–Cys-110.

The protein belongs to the neurotoxin 14 (magi-1) family. 01 (HNTX-16) subfamily. Expressed by the venom gland.

The protein localises to the secreted. In terms of biological role, probable ion channel inhibitor. This Cyriopagopus hainanus (Chinese bird spider) protein is U11-theraphotoxin-Hhn1c.